A 255-amino-acid polypeptide reads, in one-letter code: Imidazole glycerol phosphate synthase subunit HisF (255 aa).

Catalysis depends on residues Asp11 and Asp130.

Belongs to the HisA/HisF family. As to quaternary structure, heterodimer of HisH and HisF.

Its subcellular location is the cytoplasm. The enzyme catalyses 5-[(5-phospho-1-deoxy-D-ribulos-1-ylimino)methylamino]-1-(5-phospho-beta-D-ribosyl)imidazole-4-carboxamide + L-glutamine = D-erythro-1-(imidazol-4-yl)glycerol 3-phosphate + 5-amino-1-(5-phospho-beta-D-ribosyl)imidazole-4-carboxamide + L-glutamate + H(+). It participates in amino-acid biosynthesis; L-histidine biosynthesis; L-histidine from 5-phospho-alpha-D-ribose 1-diphosphate: step 5/9. Functionally, IGPS catalyzes the conversion of PRFAR and glutamine to IGP, AICAR and glutamate. The HisF subunit catalyzes the cyclization activity that produces IGP and AICAR from PRFAR using the ammonia provided by the HisH subunit. The sequence is that of Imidazole glycerol phosphate synthase subunit HisF from Campylobacter jejuni subsp. jejuni serotype O:6 (strain 81116 / NCTC 11828).